The primary structure comprises 146 residues: Putative inactive cytochrome P450 2G1 (146 aa).

Position 91 (C91) interacts with heme.

It belongs to the cytochrome P450 family. Heme serves as cofactor.

The protein is Putative inactive cytochrome P450 2G1 (CYP2G1P) of Homo sapiens (Human).